The chain runs to 257 residues: Adenosylcobinamide-GDP ribazoletransferase (257 aa).

The next 6 helical transmembrane spans lie at 4-24 (AVRG…WWLG), 40-60 (VVGL…QWFF), 64-84 (FVVQ…LLHL), 116-136 (AAVA…AALL), 140-160 (AALA…ALLI), and 193-213 (LFVT…VVAV).

It belongs to the CobS family. Mg(2+) serves as cofactor.

The protein resides in the cell inner membrane. The catalysed reaction is alpha-ribazole + adenosylcob(III)inamide-GDP = adenosylcob(III)alamin + GMP + H(+). It carries out the reaction alpha-ribazole 5'-phosphate + adenosylcob(III)inamide-GDP = adenosylcob(III)alamin 5'-phosphate + GMP + H(+). It participates in cofactor biosynthesis; adenosylcobalamin biosynthesis; adenosylcobalamin from cob(II)yrinate a,c-diamide: step 7/7. In terms of biological role, joins adenosylcobinamide-GDP and alpha-ribazole to generate adenosylcobalamin (Ado-cobalamin). Also synthesizes adenosylcobalamin 5'-phosphate from adenosylcobinamide-GDP and alpha-ribazole 5'-phosphate. This Alkalilimnicola ehrlichii (strain ATCC BAA-1101 / DSM 17681 / MLHE-1) protein is Adenosylcobinamide-GDP ribazoletransferase.